The chain runs to 217 residues: 3-oxo-tetronate 4-phosphate decarboxylase (217 aa).

Zn(2+) contacts are provided by H93 and H95. The active-site Proton donor is the Y120.

This sequence belongs to the aldolase class II family. AraD/FucA subfamily. It depends on Zn(2+) as a cofactor.

The catalysed reaction is 3-dehydro-4-O-phospho-D-erythronate + H(+) = dihydroxyacetone phosphate + CO2. It catalyses the reaction 3-dehydro-4-O-phospho-L-erythronate + H(+) = dihydroxyacetone phosphate + CO2. Its function is as follows. Catalyzes the decarboxylation of 3-oxo-tetronate 4-phosphate to dihydroxyacetone phosphate (DHAP) and CO(2). This is 3-oxo-tetronate 4-phosphate decarboxylase from Cupriavidus necator (strain ATCC 17699 / DSM 428 / KCTC 22496 / NCIMB 10442 / H16 / Stanier 337) (Ralstonia eutropha).